Consider the following 210-residue polypeptide: Tumor protein D53 homolog (210 aa).

Residues 22-73 adopt a coiled-coil conformation; it reads VTDVDFTSMISEEEKEELKAELAKLEDEISTLRQVLAAKEKHLIEIKQKLGM. A compositionally biased stretch (polar residues) spans 185–197; the sequence is SSTAHASAQSSLA. The interval 185–210 is disordered; the sequence is SSTAHASAQSSLAGTRLPESEEELQC.

It belongs to the TPD52 family. In terms of assembly, forms a homodimer or heterodimer with other members of the family.

The chain is Tumor protein D53 homolog (TPD52L1) from Gallus gallus (Chicken).